A 369-amino-acid polypeptide reads, in one-letter code: Beta-1,3-galactosyltransferase 9 (369 aa).

Residues 1 to 12 are Cytoplasmic-facing; it reads MQVTFCRLRTHQ. Residues 13-33 traverse the membrane as a helical; Signal-anchor for type II membrane protein segment; sequence WCFILFNVILFHALLFGTDFV. Residues 34 to 369 lie on the Lumenal side of the membrane; that stretch reads EEYFLHSLPY…IKNNLMYFAD (336 aa). N-linked (GlcNAc...) asparagine glycans are attached at residues N66, N96, and N109.

This sequence belongs to the glycosyltransferase 31 family.

Its subcellular location is the golgi apparatus membrane. In terms of biological role, putative glycosyltransferase that could catalyze the transfer of galactose residues from UDP-alpha-D-galactose. The polypeptide is Beta-1,3-galactosyltransferase 9 (Homo sapiens (Human)).